The sequence spans 355 residues: Heat-inducible transcription repressor HrcA (355 aa).

The protein belongs to the HrcA family.

Functionally, negative regulator of class I heat shock genes (grpE-dnaK-dnaJ and groELS operons). Prevents heat-shock induction of these operons. In Nitratidesulfovibrio vulgaris (strain ATCC 29579 / DSM 644 / CCUG 34227 / NCIMB 8303 / VKM B-1760 / Hildenborough) (Desulfovibrio vulgaris), this protein is Heat-inducible transcription repressor HrcA.